The chain runs to 152 residues: uncharacterized protein (152 aa).

The protein localises to the mitochondrion. This is an uncharacterized protein from Arabidopsis thaliana (Mouse-ear cress).